The chain runs to 433 residues: Enolase (433 aa).

Glutamine 167 lines the (2R)-2-phosphoglycerate pocket. Residue glutamate 209 is the Proton donor of the active site. 3 residues coordinate Mg(2+): aspartate 246, glutamate 287, and aspartate 314. The (2R)-2-phosphoglycerate site is built by lysine 339, arginine 368, serine 369, and lysine 390. Residue lysine 339 is the Proton acceptor of the active site.

This sequence belongs to the enolase family. Mg(2+) is required as a cofactor.

The protein localises to the cytoplasm. It localises to the secreted. The protein resides in the cell surface. It carries out the reaction (2R)-2-phosphoglycerate = phosphoenolpyruvate + H2O. The protein operates within carbohydrate degradation; glycolysis; pyruvate from D-glyceraldehyde 3-phosphate: step 4/5. Its function is as follows. Catalyzes the reversible conversion of 2-phosphoglycerate (2-PG) into phosphoenolpyruvate (PEP). It is essential for the degradation of carbohydrates via glycolysis. The protein is Enolase of Prochlorococcus marinus (strain NATL2A).